A 513-amino-acid chain; its full sequence is ATP synthase subunit alpha (513 aa).

Residue 169–176 (GDRQTGKT) participates in ATP binding.

This sequence belongs to the ATPase alpha/beta chains family. F-type ATPases have 2 components, CF(1) - the catalytic core - and CF(0) - the membrane proton channel. CF(1) has five subunits: alpha(3), beta(3), gamma(1), delta(1), epsilon(1). CF(0) has three main subunits: a(1), b(2) and c(9-12). The alpha and beta chains form an alternating ring which encloses part of the gamma chain. CF(1) is attached to CF(0) by a central stalk formed by the gamma and epsilon chains, while a peripheral stalk is formed by the delta and b chains.

The protein localises to the cell inner membrane. It carries out the reaction ATP + H2O + 4 H(+)(in) = ADP + phosphate + 5 H(+)(out). Produces ATP from ADP in the presence of a proton gradient across the membrane. The alpha chain is a regulatory subunit. The polypeptide is ATP synthase subunit alpha (Cupriavidus necator (strain ATCC 17699 / DSM 428 / KCTC 22496 / NCIMB 10442 / H16 / Stanier 337) (Ralstonia eutropha)).